We begin with the raw amino-acid sequence, 472 residues long: UDP-glycosyltransferase 708G2 (472 aa).

The active-site Proton acceptor is His23. His23 contacts an anthocyanidin. Catalysis depends on Asp117, which acts as the Charge relay. Residue Thr140 participates in UDP-alpha-D-glucose binding. Positions 283-284 (SR) are UDP. 7 residues coordinate UDP-alpha-D-glucose: Val346, Gln348, His363, Trp366, Asn367, Ser368, and Glu371. Position 386 (Gly386) interacts with an anthocyanidin. UDP-alpha-D-glucose contacts are provided by Asp387 and Gln388.

The protein belongs to the UDP-glycosyltransferase family. Expressed at low levels in leaves, flowers and immature leaves.

It carries out the reaction a 3'-hydro-2'-hydroxy-beta-oxodihydrochalcone + UDP-alpha-D-glucose = a 3'-(beta-D-glucopyranosyl)-2'-hydroxy-beta-oxodihydrochalcone + UDP + H(+). UDP-glucose-dependent glucosyltransferase catalyzing the C-glucosylation of 2-hydroxyflavanones (2-hydroxylnaringenin and 2-hydroxypinocembrin) and phloretin. No activity with flavanones, flavones or flavonols. Exhibits C-glucosylation activity toward 2-phenyl-2',4',6'-trihydroxyacetophenone. Can use UDP-xylose as sugar donor, but catalytic efficiency is much lower toward UDP-xylose than toward UDP-glucose. The chain is UDP-glycosyltransferase 708G2 (UGT708G2) from Citrus unshiu (Satsuma mandarin).